A 113-amino-acid polypeptide reads, in one-letter code: U11-theraphotoxin-Hhn1a (113 aa).

The signal sequence occupies residues 1-21; the sequence is MNTVRVTFLLVFVLAVSLGQA. Residues 22–74 constitute a propeptide that is removed on maturation; the sequence is DKDENRMEVQEKTEQGKSYLDFAENLLLQKLEELEAKLLEEDSEESRNSRQKR. Positions 61–83 are disordered; sequence EEDSEESRNSRQKRCIGEGVPCD. Intrachain disulfides connect Cys-75-Cys-90, Cys-82-Cys-95, and Cys-89-Cys-110.

The protein belongs to the neurotoxin 14 (magi-1) family. 01 (HNTX-16) subfamily. Expressed by the venom gland.

It localises to the secreted. Functionally, probable ion channel inhibitor. In Cyriopagopus hainanus (Chinese bird spider), this protein is U11-theraphotoxin-Hhn1a.